Reading from the N-terminus, the 1468-residue chain is Centrosomal protein of 290 kDa (1468 aa).

Coiled-coil stretches lie at residues 1 to 25 (ERQL…VGEK), 52 to 121 (SLSE…IEQA), 172 to 292 (KMYE…DEKA), 318 to 528 (VASK…EAQK), 559 to 592 (RIIL…ILSR), 627 to 688 (HTLK…QADN), and 736 to 1441 (IKLK…SEQF). The self-association (with itself or N-terminus) stretch occupies residues 1060–1468 (TTGLTVDQVM…QENPVNFPIY (409 aa)). The segment at 1130–1152 (LSKDAYSRPSTSGIDSDDHYQRE) is disordered.

In terms of assembly, part of the tectonic-like complex (also named B9 complex). Interacts with ATF4 via its N-terminal region. Associates with the BBSome complex, interacting (via N-terminus) with BBS4. Interacts with IQCB1/NPHP5; IQCB1 and CEP290/NPHP6 are proposed to form a functional NPHP5-6 module localized to the centrosome. Interacts with NPHP4; the interaction likely requires additional interactors. Interacts with ZNF423, FAM161A, CEP162, CEP162, CEP131, TALPID3, CCDC13, CC2D2A, RPGRIP1. Can self-associate (homo- or heteromeric). Interacts with CCP110; required for suppressing cilia formation. Interacts with RPGR. Associates (via C-terminus) with microtubules; association to microtubule is reduced in response to cellular stress, such as ultraviolet light (UV) radiation or heat shock, in a process that requires p38 MAP kinase signaling. Interacts with FAM161A. Interacts with PCM1. Interacts with CCDC66. Interacts with ARMC9 and CSPP1. Post-translationally, ubiquitinated. May undergo monoubiquitination; monoubiquitination is inhibited in response to cellular stress, such as ultraviolet light (UV) radiation or heat shock, but does not cause its displacement from centriolar satellites.

The protein localises to the cytoplasm. The protein resides in the cytoskeleton. It is found in the microtubule organizing center. Its subcellular location is the centrosome. It localises to the centriolar satellite. The protein localises to the nucleus. The protein resides in the cell projection. It is found in the cilium. Its subcellular location is the cilium basal body. It localises to the centriole. The protein localises to the cytoplasmic vesicle. Functionally, involved in early and late steps in cilia formation. Its association with CCP110 is required for inhibition of primary cilia formation by CCP110. May play a role in early ciliogenesis in the disappearance of centriolar satellites and in the transition of primary ciliar vesicles (PCVs) to capped ciliary vesicles (CCVs). Required for the centrosomal recruitment of RAB8A and for the targeting of centriole satellite proteins to centrosomes such as of PCM1. Required for the correct localization of ciliary and phototransduction proteins in retinal photoreceptor cells; may play a role in ciliary transport processes. Required for efficient recruitment of RAB8A to primary cilium. In the ciliary transition zone is part of the tectonic-like complex which is required for tissue-specific ciliogenesis and may regulate ciliary membrane composition. Involved in regulation of the BBSome complex integrity, specifically for presence of BBS2, BBS5 and BBS8/TTC8 in the complex, and in ciliary targeting of selected BBSome cargos. May play a role in controlling entry of the BBSome complex to cilia possibly implicating IQCB1/NPHP5. Activates ATF4-mediated transcription. This Bos taurus (Bovine) protein is Centrosomal protein of 290 kDa (CEP290).